A 143-amino-acid polypeptide reads, in one-letter code: Transcriptional regulator SlyA (143 aa).

Residues 2-135 enclose the HTH marR-type domain; it reads ESTLGSDLSR…LTNLVERLEQ (134 aa). Residues 49 to 72 constitute a DNA-binding region (H-T-H motif); the sequence is QIQLAKAIGIEQPSLVRTLDQLED.

It belongs to the SlyA family. Homodimer.

Transcription regulator that can specifically activate or repress expression of target genes. This Edwardsiella tarda protein is Transcriptional regulator SlyA.